The primary structure comprises 407 residues: Putative metabolite transport protein HI_1104 (407 aa).

Residues 1 to 16 lie on the Cytoplasmic side of the membrane; sequence MTNKVNSYGWKALIGS. The helical transmembrane segment at 17-37 threads the bilayer; the sequence is AVGYGMDGFDLLILGFMLSAI. The Periplasmic portion of the chain corresponds to 38 to 48; the sequence is SADLNLTPAQG. A helical transmembrane segment spans residues 49–69; it reads GSLVTWTLIGAVFGGILFGAL. Residues 70 to 77 are Cytoplasmic-facing; it reads SDKYGRVR. Residues 78 to 98 traverse the membrane as a helical segment; it reads VLTWTILLFAVFTGLCAIAQG. The Periplasmic segment spans residues 99–107; sequence YWDLLIYRT. The chain crosses the membrane as a helical span at residues 108-128; the sequence is IAGIGLGGEFGIGMALAAEAW. Residues 129–138 are Cytoplasmic-facing; that stretch reads PARHRAKAAS. Residues 139–159 traverse the membrane as a helical segment; that stretch reads YVALGWQVGVLGAALLTPLLL. Pro-160 is a topological domain (periplasmic). The helical transmembrane segment at 161-181 threads the bilayer; the sequence is HIGWRGMFLVGIFPAFVAWFL. At 182–224 the chain is on the cytoplasmic side; that stretch reads RSHLHEPEIFTQKQTALSTQSSFTDKLRSFQLLIKDKATSKIS. Residues 225 to 245 traverse the membrane as a helical segment; that stretch reads LGIVVLTSVQNFGYYGIMIWL. Residues 246-261 lie on the Periplasmic side of the membrane; it reads PNFLSKQLGFSLTKSG. The helical transmembrane segment at 262–282 threads the bilayer; sequence LWTAVTVCGMMAGIWIFGQLA. Residues 283 to 288 lie on the Cytoplasmic side of the membrane; the sequence is DRIGRK. A helical transmembrane segment spans residues 289–309; that stretch reads PSFLLFQLGAVISIVVYSQLT. Over 310–312 the chain is Periplasmic; it reads DPD. The chain crosses the membrane as a helical span at residues 313–333; that stretch reads IMLLAGAFLGMFVNGMLGGYG. The Cytoplasmic segment spans residues 334–357; the sequence is ALMAEAYPTEARATAQNVLFNIGR. Transmembrane regions (helical) follow at residues 358–378 and 379–399; these read AVGG…SFQT and AIAL…FLIP. Over 400 to 407 the chain is Cytoplasmic; sequence ELKGKALD.

It belongs to the major facilitator superfamily. Aromatic acid:H(+) symporter (AAHS) (TC 2.A.1.15) family.

Its subcellular location is the cell inner membrane. This is Putative metabolite transport protein HI_1104 from Haemophilus influenzae (strain ATCC 51907 / DSM 11121 / KW20 / Rd).